A 171-amino-acid chain; its full sequence is Calcium channel flower homolog (171 aa).

Residues 1–31 (MSGSGAAGAAAGPAPPAQEEGMTWWYRWLCR) are Cytoplasmic-facing. A helical transmembrane segment spans residues 32 to 52 (LAGVLGAVSCAISGLFNCVTI). The Extracellular segment spans residues 53–56 (HPLN). A helical membrane pass occupies residues 57–77 (IAAGVWMIMNAFILLLCEAPF). Topologically, residues 78 to 101 (CCQFVEFANTVAEKVDRLRSWQKA) are cytoplasmic. The chain crosses the membrane as a helical span at residues 102 to 122 (VFYCGMAIVPIVMSLTLTTLL). The Extracellular segment spans residues 123–124 (GN). A helical membrane pass occupies residues 125-141 (AIAFATGVLYGLSALGK). Topologically, residues 142–171 (KGDAISYARIQQQRQQADEEKLAETFEGEL) are cytoplasmic.

It belongs to the calcium channel flower family. In terms of assembly, interacts with adaptor protein complex 2 (AP-2). As to expression, expressed in neurons in the brain (at protein level). Expressed in neuroblastoma cell lines (at protein level). Expressed in cytotoxic T-lymphoocytes (at protein level). Low levels of expression in various tissues including the brain, eye, heart, liver and colon. Expression in the heart is at slightly higher levels than isoform 3. Expressed in skin cells. In terms of tissue distribution, very low levels of expression in the brain, liver and eye. Detected at very low levels of expression in skin cells. As to expression, expressed in various tissues, with highest levels of expression in the brain and eye. Expressed in skin cells. Low levels of expression in the liver, colon, heart and spleen. Barely detected in the brain and liver.

The protein resides in the cell membrane. It is found in the vesicle. Functionally, transmembrane protein which mediates synaptic endocytosis and fitness-based cell culling. In response to different stimulus strengths, controls two major modes of synaptic vesicle (SV) retrieval in hippocampal neurons; Clathrin-mediated endocytosis (CME) in response to mild stimulation and activity-dependent bulk endocytosis (ADBE) in response to strong stimulation. In cytotoxic T-lymphoocytes (CTLs) facilitates calcium-dependent endocytosis of cytotoxic granules (CGs) at the immuno synapse. Different isoforms work as fitness fingerprints in 'loser' and 'winner' cells and thereby mediate win/lose decisions as part of the cell competition process. The protein is Calcium channel flower homolog (Cacfd1) of Mus musculus (Mouse).